The following is a 90-amino-acid chain: Mitochondrial import inner membrane translocase subunit Tim10 (90 aa).

The short motif at 29-54 (CHRKCVPPHYKEAELSKGESVCLDRC) is the Twin CX3C motif element. Intrachain disulfides connect C29-C54 and C33-C50.

It belongs to the small Tim family. Heterohexamer; composed of 3 copies of TIMM9 and 3 copies of TIMM10/TIM10A, named soluble 70 kDa complex. The complex forms a 6-bladed alpha-propeller structure and associates with the TIMM22 component of the TIM22 complex. Interacts with multi-pass transmembrane proteins in transit. Also forms a complex composed of TIMM9, TIMM10/TIM10A and FXC1/TIM10B.

It is found in the mitochondrion inner membrane. In terms of biological role, mitochondrial intermembrane chaperone that participates in the import and insertion of multi-pass transmembrane proteins into the mitochondrial inner membrane. May also be required for the transfer of beta-barrel precursors from the TOM complex to the sorting and assembly machinery (SAM complex) of the outer membrane. Acts as a chaperone-like protein that protects the hydrophobic precursors from aggregation and guide them through the mitochondrial intermembrane space. In Bos taurus (Bovine), this protein is Mitochondrial import inner membrane translocase subunit Tim10 (TIMM10).